The sequence spans 393 residues: MAMLLKNKDQMIVSMGPHHPSMHGVLRLIVTLDGENVADCEPVLGYLHRGMEKIAENRTIIQYLPYVTRWDYLATMFTEAITVNAPEKLANIRIPKRASYIRVIMLELSRIASHLLWLGPFMADIGAQTPFFYILREREMIYDLFEAATGMRMMHNYFRIGGVAVDLPYGWIDKCLDFCDYFSPKISEYEKLIVHNPIFLERVKGVGFISREEAINWGLSGPMLRASGVQWDLRKVDHYECYDEVDWQIQWQKEGDSLARYLVRIGEMRESVKILQQALRIIPGGPYENLEARRLHQSQNLEWNDFDYQFMGKKSSPTFKLLKQEHYVRIEAPKGELGIFLIGNDSVFPWRWKIRPPGFINLQILPQLVRGMKLADIMPILGSIDIIMGEIDR.

It belongs to the complex I 49 kDa subunit family. NDH is composed of at least 16 different subunits, 5 of which are encoded in the nucleus.

It is found in the plastid. Its subcellular location is the chloroplast thylakoid membrane. The enzyme catalyses a plastoquinone + NADH + (n+1) H(+)(in) = a plastoquinol + NAD(+) + n H(+)(out). The catalysed reaction is a plastoquinone + NADPH + (n+1) H(+)(in) = a plastoquinol + NADP(+) + n H(+)(out). In terms of biological role, NDH shuttles electrons from NAD(P)H:plastoquinone, via FMN and iron-sulfur (Fe-S) centers, to quinones in the photosynthetic chain and possibly in a chloroplast respiratory chain. The immediate electron acceptor for the enzyme in this species is believed to be plastoquinone. Couples the redox reaction to proton translocation, and thus conserves the redox energy in a proton gradient. The chain is NAD(P)H-quinone oxidoreductase subunit H, chloroplastic from Psilotum nudum (Whisk fern).